Consider the following 517-residue polypeptide: GMP synthase [glutamine-hydrolyzing] (517 aa).

Positions 11–202 (KIIVLDFGSQ…AFKVCGAKAN (192 aa)) constitute a Glutamine amidotransferase type-1 domain. C88 acts as the Nucleophile in catalysis. Catalysis depends on residues H176 and E178. In terms of domain architecture, GMPS ATP-PPase spans 203 to 392 (WTMDDFIEMQ…LGIPHDLVWR (190 aa)). 230-236 (SGGVDSS) contributes to the ATP binding site.

As to quaternary structure, homodimer.

The catalysed reaction is XMP + L-glutamine + ATP + H2O = GMP + L-glutamate + AMP + diphosphate + 2 H(+). Its pathway is purine metabolism; GMP biosynthesis; GMP from XMP (L-Gln route): step 1/1. In terms of biological role, catalyzes the synthesis of GMP from XMP. The polypeptide is GMP synthase [glutamine-hydrolyzing] (Lactobacillus johnsonii (strain CNCM I-12250 / La1 / NCC 533)).